We begin with the raw amino-acid sequence, 384 residues long: Prokineticin receptor 2 (384 aa).

Residues 1–53 lie on the Extracellular side of the membrane; the sequence is MAAQNGNASFPANFSIPQEHASSLPFNFSYDDYDLPLDEDEDMTKTQTFFAAK. N-linked (GlcNAc...) asparagine glycans are attached at residues N7, N13, and N27. The chain crosses the membrane as a helical span at residues 54–74; sequence IVIGVALVGIMLTCGIGNFVF. Topologically, residues 75–89 are cytoplasmic; sequence ITALTRYKKLRNLTN. The helical transmembrane segment at 90–110 threads the bilayer; it reads LLIANLAISDFLVAIICCPFE. At 111-137 the chain is on the extracellular side; that stretch reads MDYYVVHQLSWEHGHVLCACINYLRTV. C128 and C208 are oxidised to a cystine. Residues 138-158 traverse the membrane as a helical segment; the sequence is SLYVSTNALLAIAIDRYLAIV. The Cytoplasmic segment spans residues 159-171; sequence HPLKPRMNYQTAS. The helical transmembrane segment at 172 to 192 threads the bilayer; it reads FLIALVWMVSILISIPSAYFT. Over 193-223 the chain is Extracellular; it reads KETVLFIVKNQKKIFCGQVWPVDQQLYYKSY. Residues 224–244 form a helical membrane-spanning segment; it reads FLFVFGIEFLGPVFTMTLCYA. Residues 245-273 lie on the Cytoplasmic side of the membrane; that stretch reads RISRELWFKAVPGFQTEQIRKRLRCRRKT. Residues 274–294 form a helical membrane-spanning segment; that stretch reads VLVLMCILTAYVLCWAPFYGF. Topologically, residues 295–313 are extracellular; sequence TIVRDFFPTVFVKEKHYLT. A helical membrane pass occupies residues 314–334; the sequence is AFYVVECIAMSNSMINTVCFV. At 335–384 the chain is on the cytoplasmic side; it reads TVKNSTMKYFKKMLLLHWRPSHHGSKSSADLDLKTSRLPATEEVDCIRLK.

This sequence belongs to the G-protein coupled receptor 1 family. In terms of assembly, homodimer.

It localises to the cell membrane. Receptor for prokineticin 2. Exclusively coupled to the G(q) subclass of heteromeric G proteins. Activation leads to mobilization of calcium, stimulation of phosphoinositide turnover and activation of p44/p42 mitogen-activated protein kinase. The chain is Prokineticin receptor 2 (PROKR2) from Bos taurus (Bovine).